The following is a 326-amino-acid chain: Vestitone reductase (326 aa).

Residues 12–18 (GGTGFLG), R37, and Y164 each bind NADP(+).

The protein belongs to the NAD(P)-dependent epimerase/dehydratase family. Dihydroflavonol-4-reductase subfamily. In terms of assembly, monomer. As to expression, detected in roots, and at lower levels in root nodules. Not detected in petioles, leaf and stem.

The enzyme catalyses a (3R,4R)-4,2'-dihydroxyisoflavan + NADP(+) = a (3R)-2'-hydroxyisoflavanone + NADPH + H(+). With respect to regulation, inhibited by vestitone concentrations above 50 uM. Stereospecific enzyme that catalyzes the NADPH-dependent reduction of (3R)-vestitone to (3R,4R)-4'-methoxyisoflavan-2',4,7-triol (DMI). Has no activity with (3S)-vestitone. Catalyzes the penultimate step in the biosynthesis of the phytoalexin medicarpin, and thereby contributes to plant defense reactions. The protein is Vestitone reductase of Medicago sativa (Alfalfa).